Here is a 199-residue protein sequence, read N- to C-terminus: A-type ATP synthase subunit E (199 aa).

Belongs to the V-ATPase E subunit family. Has multiple subunits with at least A(3), B(3), C, D, E, F, H, I and proteolipid K(x).

The protein localises to the cell membrane. Its function is as follows. Component of the A-type ATP synthase that produces ATP from ADP in the presence of a proton gradient across the membrane. This is A-type ATP synthase subunit E from Pyrococcus abyssi (strain GE5 / Orsay).